A 228-amino-acid polypeptide reads, in one-letter code: Ribonuclease 3 (228 aa).

Residues 7-132 (LSAFMDRLGH…VIAAVYLDAG (126 aa)) form the RNase III domain. Glutamate 45 serves as a coordination point for Mg(2+). The active site involves aspartate 49. Mg(2+)-binding residues include aspartate 118 and glutamate 121. Glutamate 121 is an active-site residue. The 70-residue stretch at 157–226 (DPKTALQEWA…AKALLERLER (70 aa)) folds into the DRBM domain.

Belongs to the ribonuclease III family. Homodimer. Mg(2+) serves as cofactor.

Its subcellular location is the cytoplasm. It carries out the reaction Endonucleolytic cleavage to 5'-phosphomonoester.. In terms of biological role, digests double-stranded RNA. Involved in the processing of ribosomal RNA precursors and of some mRNAs. Complements an E.coli disruption mutant, but the E.coli enzyme does not cleave R.capsulatus rRNA precursor, showing substrate recognition is different. Probably also processes some mRNAs, and tRNAs when they are encoded in the rRNA operon. Probably processes pre-crRNA and tracrRNA of type II CRISPR loci if present in the organism. This chain is Ribonuclease 3 (rnc), found in Rhodobacter capsulatus (Rhodopseudomonas capsulata).